Reading from the N-terminus, the 92-residue chain is MSSRSTTIAFLFIATLLVFQCVSAQSSAEDADYLEKYQRIARAPKPKFIRFGRAGAKFIRFGRSRNTWEDGYASPSVNELYVKRGAKFIRFG.

Residues 1 to 41 constitute a propeptide that is removed on maturation; sequence MSSRSTTIAFLFIATLLVFQCVSAQSSAEDADYLEKYQRIA. 2 positions are modified to phenylalanine amide: Phe-51 and Phe-61. A propeptide spanning residues 64-82 is cleaved from the precursor; it reads SRNTWEDGYASPSVNELYV. The residue at position 91 (Phe-91) is a Phenylalanine amide.

This sequence belongs to the FARP (FMRFamide related peptide) family. As to expression, each flp gene is expressed in a distinct set of neurons. Flp-5 is expressed in the ASE sensory neurons, the 14 and M4 cholinergic pharyngeal motoneurons, and the PVT and RMG neurons. It is weakly expressed in the PB and 12 neurons. Also expressed in pharyngeal muscle.

The protein resides in the secreted. Functionally, FMRFamides and FMRFamide-like peptides are neuropeptides. GAKFIRF-amide has an excitatory effect on dissected pharyngeal myogenic muscle system. The chain is FMRFamide-like neuropeptides 5 from Caenorhabditis elegans.